Consider the following 192-residue polypeptide: Xanthine phosphoribosyltransferase (192 aa).

Xanthine contacts are provided by leucine 20 and asparagine 27. Residue 128–132 (ANGQA) participates in 5-phospho-alpha-D-ribose 1-diphosphate binding. Xanthine is bound at residue lysine 156.

It belongs to the purine/pyrimidine phosphoribosyltransferase family. Xpt subfamily. Homodimer.

Its subcellular location is the cytoplasm. The enzyme catalyses XMP + diphosphate = xanthine + 5-phospho-alpha-D-ribose 1-diphosphate. It functions in the pathway purine metabolism; XMP biosynthesis via salvage pathway; XMP from xanthine: step 1/1. Converts the preformed base xanthine, a product of nucleic acid breakdown, to xanthosine 5'-monophosphate (XMP), so it can be reused for RNA or DNA synthesis. This is Xanthine phosphoribosyltransferase from Listeria monocytogenes serotype 4b (strain F2365).